Reading from the N-terminus, the 189-residue chain is Peptidyl-tRNA hydrolase (189 aa).

Y15 provides a ligand contact to tRNA. Residue H20 is the Proton acceptor of the active site. TRNA contacts are provided by F66, N68, and N114.

The protein belongs to the PTH family. Monomer.

It is found in the cytoplasm. The catalysed reaction is an N-acyl-L-alpha-aminoacyl-tRNA + H2O = an N-acyl-L-amino acid + a tRNA + H(+). Hydrolyzes ribosome-free peptidyl-tRNAs (with 1 or more amino acids incorporated), which drop off the ribosome during protein synthesis, or as a result of ribosome stalling. In terms of biological role, catalyzes the release of premature peptidyl moieties from peptidyl-tRNA molecules trapped in stalled 50S ribosomal subunits, and thus maintains levels of free tRNAs and 50S ribosomes. This is Peptidyl-tRNA hydrolase from Streptococcus pneumoniae serotype 2 (strain D39 / NCTC 7466).